Here is a 104-residue protein sequence, read N- to C-terminus: PE-PGRS family protein PE_PGRS60 (104 aa).

Residues 1 to 60 enclose the PE domain; it reads MSYVIAAPEALVAAATDLATLGSTIGAANAAAAGSTTALLTAGADEVSAAIAAYSECTAR. The tract at residues 64 to 104 is disordered; sequence HSVRGRRRSMSGSCRPWPQVGAPMRPPRPPASRRCRARSIC. The segment covering 94–104 has biased composition (basic residues); the sequence is ASRRCRARSIC.

It belongs to the mycobacterial PE family. PGRS subfamily.

In terms of biological role, binds fibronectin. May contribute to pathogenicity. The sequence is that of PE-PGRS family protein PE_PGRS60 from Mycobacterium tuberculosis (strain ATCC 25618 / H37Rv).